The sequence spans 218 residues: Riboflavin synthase (218 aa).

Lumazine-binding repeat units lie at residues 1 to 97 and 98 to 194; these read MFTG…FGGH and IVSG…ERLL. 2,4-dihydroxypteridine is bound by residues 4 to 6, 48 to 50, 62 to 67, 101 to 103, Lys-136, 145 to 147, and 159 to 164; these read GII, CLT, DLSIET, GHV, SLT, and TIVPHT.

In terms of assembly, homotrimer.

The enzyme catalyses 2 6,7-dimethyl-8-(1-D-ribityl)lumazine + H(+) = 5-amino-6-(D-ribitylamino)uracil + riboflavin. Its pathway is cofactor biosynthesis; riboflavin biosynthesis; riboflavin from 2-hydroxy-3-oxobutyl phosphate and 5-amino-6-(D-ribitylamino)uracil: step 2/2. Catalyzes the dismutation of two molecules of 6,7-dimethyl-8-ribityllumazine, resulting in the formation of riboflavin and 5-amino-6-(D-ribitylamino)uracil. The protein is Riboflavin synthase of Photobacterium phosphoreum.